Here is a 426-residue protein sequence, read N- to C-terminus: MLFHSLSGPEVHGVIDEMDRRQERGSGISSAIDRGDTETTMPSISSDRAALCAGCGGKISDRYYLLAVDKQWHMRCLKCCECKLNLESELTCFSKDGSIYCKEDYYRRFSVQRCARCHLGISESEMVMRARDLVYHLNCFTCTTCNKMLTTGDHFGMKDSLVYCRLHFEALLQGEYPPHFNHADVARAAAAAEQLRVQDWAQLGLTLGLPYYNGVGTVQKGRPRKRKSPGPGADLAAYNAALSCNENDAEHLDRDQPYPSSQKTKRMRTSFKHHQLRTMKSYFAINHNPDAKDLKQLAQKTGLTKRVLQVWFQNARAKFRRNLLRQENTGVDKTSDATLQTGTPSGPASELSNASLSPSSTPTTLTDLTSPTLPTVTSVLTSVPGNLEATSPTALHKRLLPTFSNDSPPPSPLSPHDFFKKEIIFS.

The segment covering 14–24 has biased composition (basic and acidic residues); that stretch reads VIDEMDRRQER. The interval 14-42 is disordered; the sequence is VIDEMDRRQERGSGISSAIDRGDTETTMP. LIM zinc-binding domains lie at 52 to 104 and 114 to 167; these read CAGC…CKED and CARC…CRLH. Residues 248–268 form a disordered region; the sequence is DAEHLDRDQPYPSSQKTKRMR. The segment at residues 264-323 is a DNA-binding region (homeobox); it reads TKRMRTSFKHHQLRTMKSYFAINHNPDAKDLKQLAQKTGLTKRVLQVWFQNARAKFRRNL. Positions 305–321 match the Nuclear localization signal motif; it reads KRVLQVWFQNARAKFRR. Positions 326-354 are enriched in polar residues; sequence QENTGVDKTSDATLQTGTPSGPASELSNA. The tract at residues 326 to 370 is disordered; that stretch reads QENTGVDKTSDATLQTGTPSGPASELSNASLSPSSTPTTLTDLTS. Positions 355-370 are enriched in low complexity; that stretch reads SLSPSSTPTTLTDLTS.

Interacts (via LIM domains) with CITED2. Interacts with POU4F2. As to expression, found in discrete regions of the developing CNS, primarily in diencephalic and telencephalic structures and a subset of lymphoid tissues. Also found in embryonic spinal cord and fetal liver.

It is found in the nucleus. In terms of biological role, acts as a transcriptional activator. Stimulates the promoter of the alpha-glycoprotein gene. Transcriptional regulatory protein involved in the control of cell differentiation in developing lymphoid and neural cell types. In Rattus norvegicus (Rat), this protein is LIM/homeobox protein Lhx2 (Lhx2).